A 1285-amino-acid chain; its full sequence is MNLYLLLLVIATSSWQFVAGLECPVECTCDKKGLVVDCSSSGLTRIPKNISRNVRSLVIRNNRIHKLKRSDLEGFNQLETLVLTHNKIKIIEENVLDHLPELKRLSLAHNELVYIPPLCSDSRPLASLNLKRNHIQFIDEQVLRYFPDLTQLDFSHNRIQSLRTKLFDNLPALSHAHLHSNPWHCDCRASKVKALLQKVKWEKKVYCTNPVELRHQALDEVDDSALTCARPAEESWTGEEIKLTCAKNSSSKLVVWMYENVEVDSSSLDGYEIHDTVITVPRKTNVNFMTCTYDFDHIPHHRRLRQSQHQGNGSPQFTYKPRDNSFREGSEVKVNCEVMGNPKPTINWYHNGKRFISSRKRQLGLSNNVLRIYPFLEEDSGRYTCEAVNSVGKVRHAFSLDLISSVPPNIYEGPQSVSQNLGGSVVFVCKANGNPVPDYTWSFDGSTIGHIKGRFMVSDDGTELRISNIEKKDEGYYSCMAGNPVGAMSADAKLTVIGGETRKAAAPQIDEELLRAIAQKARQNVENAVEKTRKQLTQDKVTNTNDLKRLFRFSTPKQAVELSKAREIYEESVRLVREHVEKGLILNVDELHPKNVSYESVLHVTHVQALMGLSGCHTGQYKNPCTDTCFHHRYRSFDGQCNNKNKPMTGVSLMPLRRLLKPVYENGFNTPVGWEKGRLYNGYPLPNVREVSRQLVATENITPHSKLSSMVMQWGQFVDHDLTHTVTALSRHSYATGAFCNRTCENLDPCFNIPLSPNDPRVKSGSAKYPCIEFERSAAVCGSGETSLVFNRVTYREQMNALTSFLDASNVYGSNEVQAQELRDTYNNNGMLRFDITSEAGKEYLPFEKDSNMDCRRNFSEENPIRCFLAGDLRANEQLALAATHTIFIREHNRIAKKLKSMNGNWDGEIIYHETRKIVGAMMQHITYKHWMPIIFGGQAQMNKFVGTYQGYDPDVDASVTNAFATAAFRFGHTIINPSLFRLGNDFMPIKEGHIALHKAFFTPELVLTQGGVDPLLRGLFASPLKHPMPTQLLNMELIEKLFMKGHEVSLDLAVMNIQRSRDHGLPSYTEYRKFCNLPVPVQWEDMKGYIKDDMIIQKLRGLYGVPQNIDLWVGGIVEEKLENGLFGPTFACIIGEQFRKIRDGDRFWYEKDGVFTPEQLREIKKITLARLFCDNGDNIDRIQKDVFMYPGMDKENYGTCQETEMMNLRAWSKCCDNVCPTMLDRILRSRHRGSRLHGCNQNGIWRPEGAKWIPQNEICTECVCQGSRVWCSTKEDCSDNRSPF.

Positions 1–20 (MNLYLLLLVIATSSWQFVAG) are cleaved as a signal peptide. One can recognise an LRRNT domain in the interval 21–53 (LECPVECTCDKKGLVVDCSSSGLTRIPKNISRN). LRR repeat units lie at residues 27–49 (CTCDKKGLVVDCSSSGLTRIPKN), 50–72 (ISRNVRSLVIRNNRIHKLKRSDL), 73–96 (EGFNQLETLVLTHNKIKIIEENVL), 97–120 (DHLPELKRLSLAHNELVYIPPLCS), 122–143 (SRPLASLNLKRNHIQFIDEQVL), 145–168 (YFPDLTQLDFSHNRIQSLRTKLFD), and 204–227 (KVYCTNPVELRHQALDEVDDSALT). Asn49 is a glycosylation site (N-linked (GlcNAc...) asparagine). The LRRCT domain maps to 180-228 (SNPWHCDCRASKVKALLQKVKWEKKVYCTNPVELRHQALDEVDDSALTC). Asn248 is a glycosylation site (N-linked (GlcNAc...) asparagine). Residues 305–324 (RQSQHQGNGSPQFTYKPRDN) form a disordered region. Over residues 307–317 (SQHQGNGSPQF) the composition is skewed to polar residues. Ig-like C2-type domains follow at residues 315–401 (PQFT…FSLD) and 408–495 (PNIY…AKLT). Cystine bridges form between Cys336-Cys385 and Cys429-Cys479. A coiled-coil region spans residues 508-550 (QIDEELLRAIAQKARQNVENAVEKTRKQLTQDKVTNTNDLKRL). Asn595 carries N-linked (GlcNAc...) asparagine glycosylation. Cys625 and Cys641 are disulfide-bonded. Asp719 serves as a coordination point for heme b. His720 acts as the Proton acceptor in catalysis. Asp721 is a Ca(2+) binding site. Cystine bridges form between Cys740/Cys750 and Cys744/Cys771. Asn741 carries N-linked (GlcNAc...) asparagine glycosylation. Ca(2+) contacts are provided by Thr803, Phe805, Asp807, and Ser809. Asn858 is a glycosylation site (N-linked (GlcNAc...) asparagine). Heme b contacts are provided by Glu877 and His973. 2 LRR repeats span residues 998 to 1022 (HKAFFTPELVLTQGGVDPLLRGLFA) and 1049 to 1073 (VSLDLAVMNIQRSRDHGLPSYTEYR). Cystine bridges form between Cys1076/Cys1133 and Cys1174/Cys1201. An LRR 12 repeat occupies 1168 to 1189 (TLARLFCDNGDNIDRIQKDVFM).

The protein belongs to the peroxidase family. XPO subfamily. Ca(2+) serves as cofactor. It depends on heme b as a cofactor. Expressed in the ventral nerve cord, the dorsal nerve cord, head neurons, GABAergic and cholinergic neurons, body wall muscles, vulval muscles, uterine muscles, intestine, the hypodermis and in coelomocytes.

The protein resides in the secreted. It localises to the extracellular space. Its subcellular location is the extracellular matrix. It carries out the reaction L-lysyl-[collagen] + L-methionyl-[collagen] + H2O2 = [collagen]-L-lysyl-N-S-L-methionyl-[collagen] + 2 H2O + H(+). The enzyme catalyses bromide + H2O2 = hypobromite + H2O. It catalyses the reaction L-lysyl-[collagen] + L-methionyl-[collagen] + hypobromite = [collagen]-L-lysyl-N-S-L-methionyl-[collagen] + bromide + H2O + H(+). The catalysed reaction is L-tyrosyl-[protein] + bromide + H2O2 + H(+) = 3-bromo-L-tyrosyl-[protein] + 2 H2O. It carries out the reaction hypobromite + L-tyrosyl-[protein] + H(+) = 3-bromo-L-tyrosyl-[protein] + H2O. Its function is as follows. Catalyzes the two-electron oxidation of bromide by hydrogen peroxide and generates hypobromite as a reactive intermediate which mediates the formation of sulfilimine cross-links between methionine and hydroxylysine residues within an uncross-linked collagen IV NC1 hexamer. Plays a role in the attachment of tissues and in axonal guidance during early developmental stages. May functionally antagonize the peroxidasin pxn-2 to maintain neuronal development. This is Peroxidasin homolog pxn-1 from Caenorhabditis elegans.